We begin with the raw amino-acid sequence, 449 residues long: Intestinal acid phosphatase (449 aa).

The first 19 residues, 1 to 19 (MVSAISIVAIFALEGFVTT), serve as a signal peptide directing secretion. Over 20 to 428 (YSDGTKDLVF…TDLNKSSSFA (409 aa)) the chain is Extracellular. Catalysis depends on histidine 36, which acts as the Nucleophile. Residue aspartate 321 is the Proton donor of the active site. Residues 429 to 449 (TVSMLFIAAILAINNNFLGLF) traverse the membrane as a helical segment.

It belongs to the histidine acid phosphatase family. In terms of assembly, homodimer. In terms of processing, the N-terminus is blocked. Expressed in the intestine, specifically on the edge of the gut lumen, in the 14 posterior cells of the intestine.

It localises to the membrane. The enzyme catalyses a phosphate monoester + H2O = an alcohol + phosphate. In terms of biological role, acid phosphatase required for normal growth and development. Specifically required for normal gut differentiation. This chain is Intestinal acid phosphatase, found in Caenorhabditis elegans.